Reading from the N-terminus, the 83-residue chain is CDC42 small effector protein 2 (83 aa).

S-palmitoyl cysteine attachment occurs at residues C10 and C11. The 14-residue stretch at 28-41 (IGEPTNFVHTAHVG) folds into the CRIB domain. S42 and S51 each carry phosphoserine.

This sequence belongs to the CDC42SE/SPEC family. As to quaternary structure, interacts with CDC42 (in GTP-bound form). Interacts weakly with RAC1 and not at all with RHOA.

The protein localises to the cytoplasm. It localises to the cytoskeleton. The protein resides in the cell membrane. Its subcellular location is the cell projection. It is found in the phagocytic cup. Probably involved in the organization of the actin cytoskeleton by acting downstream of CDC42, inducing actin filament assembly. Alters CDC42-induced cell shape changes. In activated T-cells, may play a role in CDC42-mediated F-actin accumulation at the immunological synapse. May play a role in early contractile events in phagocytosis in macrophages. This is CDC42 small effector protein 2 (Cdc42se2) from Rattus norvegicus (Rat).